Consider the following 340-residue polypeptide: N-acetyl-gamma-glutamyl-phosphate reductase (340 aa).

Cys-149 is an active-site residue.

The protein belongs to the NAGSA dehydrogenase family. Type 1 subfamily.

The protein localises to the cytoplasm. The catalysed reaction is N-acetyl-L-glutamate 5-semialdehyde + phosphate + NADP(+) = N-acetyl-L-glutamyl 5-phosphate + NADPH + H(+). It participates in amino-acid biosynthesis; L-arginine biosynthesis; N(2)-acetyl-L-ornithine from L-glutamate: step 3/4. Functionally, catalyzes the NADPH-dependent reduction of N-acetyl-5-glutamyl phosphate to yield N-acetyl-L-glutamate 5-semialdehyde. The chain is N-acetyl-gamma-glutamyl-phosphate reductase from Vesicomyosocius okutanii subsp. Calyptogena okutanii (strain HA).